The sequence spans 396 residues: Pre-mycofactocin synthase (396 aa).

The FMN hydroxy acid dehydrogenase domain maps to 1–383; sequence MAEAWFETVA…SPADILVPTG (383 aa). The FMN site is built by serine 108, glutamine 128, threonine 156, and lysine 254. Histidine 278 (proton acceptor) is an active-site residue. FMN-binding positions include 309–313 and 332–333; these read DGGIR and GR.

The protein belongs to the FMN-dependent alpha-hydroxy acid dehydrogenase family. FMN serves as cofactor.

It carries out the reaction 3-amino-5-[(4-hydroxyphenyl)methyl]-4,4-dimethyl-2-pyrrolidin-2-one + O2 + H2O = pre-mycofactocin + H2O2 + NH4(+). Involved in the biosynthesis of the enzyme cofactor mycofactocin (MFT). Catalyzes the oxidative deamination of AHDP (3-amino-5-[(4-hydroxyphenyl)methyl]-4,4-dimethyl-2-pyrrolidin-2-one), forming an alpha-keto amide moiety on the resulting molecule, which is called pre-mycofactocin (PMFT). This reaction occurs via a 5-[(4-hydroxyphenyl)methyl]-3-imino-4,4-dimethylpyrrolidin-2-one intermediate, which converts to PMFT. The alpha-keto amide moiety is the redox-active center for the redox activity of mycofactocin. The protein is Pre-mycofactocin synthase (mftD) of Mycobacterium tuberculosis (strain CDC 1551 / Oshkosh).